Reading from the N-terminus, the 303-residue chain is Coenzyme PQQ synthesis protein B (303 aa).

It belongs to the PqqB family.

The protein operates within cofactor biosynthesis; pyrroloquinoline quinone biosynthesis. Its function is as follows. May be involved in the transport of PQQ or its precursor to the periplasm. This Pseudomonas savastanoi pv. phaseolicola (strain 1448A / Race 6) (Pseudomonas syringae pv. phaseolicola (strain 1448A / Race 6)) protein is Coenzyme PQQ synthesis protein B.